Consider the following 93-residue polypeptide: UPF0298 protein GWCH70_0997 (93 aa).

This sequence belongs to the UPF0298 family.

Its subcellular location is the cytoplasm. This Geobacillus sp. (strain WCH70) protein is UPF0298 protein GWCH70_0997.